A 147-amino-acid chain; its full sequence is Hemoglobin subunit epsilon-M (147 aa).

The Globin domain maps to 3–147 (HFTPEDKTNI…VSSALGHKYH (145 aa)). 2 positions are modified to phosphoserine: S14 and S51. 2 residues coordinate heme b: H64 and H93.

This sequence belongs to the globin family. Red blood cells.

Hemoglobin epsilon chain is a beta-type chain found in early embryos. In Didelphis virginiana (North American opossum), this protein is Hemoglobin subunit epsilon-M (HBE1).